A 212-amino-acid chain; its full sequence is MYFINPQEKFPPVSFADEDGLLAVTRDLSPDRLMEAYYKGIFPWYNEGQPVLWWSPDPRMVLFPENLKIAKSMRPYLNQDKFQVTFNQEFEKVIEACGNVNREGQDGTWITPEIKENYLKLHQEGIAVSTEVWEGSMLVGGLYGIYLKDKKVFCGESMFSKASNASKFGFIKLVQKLEKEGVKLIDCQIYTSHLESLGAEEIDRIEFLKFLI.

This sequence belongs to the L/F-transferase family.

Its subcellular location is the cytoplasm. The catalysed reaction is N-terminal L-lysyl-[protein] + L-leucyl-tRNA(Leu) = N-terminal L-leucyl-L-lysyl-[protein] + tRNA(Leu) + H(+). It catalyses the reaction N-terminal L-arginyl-[protein] + L-leucyl-tRNA(Leu) = N-terminal L-leucyl-L-arginyl-[protein] + tRNA(Leu) + H(+). The enzyme catalyses L-phenylalanyl-tRNA(Phe) + an N-terminal L-alpha-aminoacyl-[protein] = an N-terminal L-phenylalanyl-L-alpha-aminoacyl-[protein] + tRNA(Phe). Functionally, functions in the N-end rule pathway of protein degradation where it conjugates Leu, Phe and, less efficiently, Met from aminoacyl-tRNAs to the N-termini of proteins containing an N-terminal arginine or lysine. In Christiangramia forsetii (strain DSM 17595 / CGMCC 1.15422 / KT0803) (Gramella forsetii), this protein is Leucyl/phenylalanyl-tRNA--protein transferase.